The primary structure comprises 425 residues: CDP-diacylglycerol--serine O-phosphatidyltransferase 1 (425 aa).

Residues 1–16 (MEPNGYRKERRKEQHL) are compositionally biased toward basic and acidic residues. The interval 1–23 (MEPNGYRKERRKEQHLGRMNGGG) is disordered. Transmembrane regions (helical) follow at residues 42 to 62 (TISL…ALDP), 79 to 99 (WAMI…TVLI), 105 to 125 (IWRL…FLLF), 197 to 217 (PLLW…RHML), 227 to 247 (SIVL…MYTV), 296 to 316 (FIQV…TFFL), 321 to 341 (WIPP…LIAI), 361 to 381 (GAFC…CIKF), and 390 to 410 (MPLW…AFLL).

The protein belongs to the CDP-alcohol phosphatidyltransferase class-I family. As to expression, expressed in trichomes, leaf veins and root vasculature.

It localises to the endoplasmic reticulum membrane. It is found in the nucleus envelope. The catalysed reaction is a CDP-1,2-diacyl-sn-glycerol + L-serine = a 1,2-diacyl-sn-glycero-3-phospho-L-serine + CMP + H(+). The protein operates within phospholipid metabolism; phosphatidylethanolamine biosynthesis; phosphatidylethanolamine from CDP-diacylglycerol: step 1/2. In terms of biological role, catalyzes a base-exchange reaction in which the polar head group of phosphatidylethanolamine (PE) or phosphatidylcholine (PC) is replaced by L-serine. Is essential for phosphatidylserine (PS) biosynthesis and PE seems to be the most plausible substrate. Plays an important role in microspore maturation. The polypeptide is CDP-diacylglycerol--serine O-phosphatidyltransferase 1 (PSS1) (Arabidopsis thaliana (Mouse-ear cress)).